A 287-amino-acid chain; its full sequence is Ribonuclease Z (287 aa).

Residues His-64, His-66, Asp-68, His-69, His-124, Asp-191, and His-250 each contribute to the Zn(2+) site. The Proton acceptor role is filled by Asp-68.

Belongs to the RNase Z family. In terms of assembly, homodimer. The cofactor is Zn(2+).

The enzyme catalyses Endonucleolytic cleavage of RNA, removing extra 3' nucleotides from tRNA precursor, generating 3' termini of tRNAs. A 3'-hydroxy group is left at the tRNA terminus and a 5'-phosphoryl group is left at the trailer molecule.. In terms of biological role, zinc phosphodiesterase, which displays some tRNA 3'-processing endonuclease activity. Probably involved in tRNA maturation, by removing a 3'-trailer from precursor tRNA. The chain is Ribonuclease Z from Pyrobaculum neutrophilum (strain DSM 2338 / JCM 9278 / NBRC 100436 / V24Sta) (Thermoproteus neutrophilus).